A 202-amino-acid polypeptide reads, in one-letter code: MNWYVRLLQKYPYRMAVTSTSSLFMIGDCVSQRYFSDKPYEPMRTARAGIYACAFAPAMTAWFRFLGQQQLPVIAKVAIDQAVFAPSSIGYYFSVMGLLEGKSPDTIWQSLKNQYWDTLKCGWMIWPAFQLFNFGIVPPNFRVLASNCCGLVWNTFLAYQNANKMEKGHVADLVIEEVKEEVKEVKQEVLAEVKVIKGFVKQ.

A run of 4 helical transmembrane segments spans residues 15-31 (MAVTSTSSLFMIGDCVS), 48-66 (AGIYACAFAPAMTAWFRFL), 82-99 (AVFAPSSIGYYFSVMGLL), and 143-159 (VLASNCCGLVWNTFLAY).

It belongs to the peroxisomal membrane protein PXMP2/4 family.

The protein resides in the mitochondrion inner membrane. Functionally, may be involved in cellular response to stress. Required to maintain mitochondrial DNA (mtDNA) integrity and stability. The sequence is that of Protein SYM1 (SYM1) from Yarrowia lipolytica (strain CLIB 122 / E 150) (Yeast).